The primary structure comprises 475 residues: Trifunctional enzyme subunit beta, mitochondrial (475 aa).

The transit peptide at 1–34 (MTTILTSTFRNLSTTSKWALRSSIRPLSCSSQLH) directs the protein to the mitochondrion. N6-succinyllysine is present on Lys53. Lys73 carries the post-translational modification N6-acetyllysine; alternate. Lys73 is modified (N6-succinyllysine; alternate). Cys139 acts as the Acyl-thioester intermediate in catalysis. Residues 174–221 (IRHSRNMRKMMLDLNKAKTLGQRLSLLSKFRLNFLSPELPAVAEFSTN) lie within the membrane without spanning it. Residue Lys189 is modified to N6-acetyllysine; alternate. An N6-succinyllysine; alternate modification is found at Lys189. Residues Lys191, Lys273, and Lys292 each carry the N6-succinyllysine modification. Position 294 is an N6-acetyllysine; alternate (Lys294). Lys294 is modified (N6-succinyllysine; alternate). Lys299 is subject to N6-acetyllysine. An N6-acetyllysine; alternate modification is found at Lys333. Lys333 is modified (N6-succinyllysine; alternate). An N6-acetyllysine mark is found at Lys349 and Lys362. Residue Cys459 is the Proton donor/acceptor of the active site.

The protein belongs to the thiolase-like superfamily. Thiolase family. In terms of assembly, heterotetramer of 2 alpha/HADHA and 2 beta/HADHB subunits; forms the mitochondrial trifunctional enzyme. Also purified as higher order heterooligomers including a 4 alpha/HADHA and 4 beta/HADHB heterooligomer which physiological significance remains unclear. The mitochondrial trifunctional enzyme interacts with MTLN. Interacts with RSAD2/viperin. Post-translationally, acetylation of Lys-202 is observed in liver mitochondria from fasted mice but not from fed mice.

Its subcellular location is the mitochondrion. The protein resides in the mitochondrion inner membrane. It localises to the mitochondrion outer membrane. It is found in the endoplasmic reticulum. The enzyme catalyses an acyl-CoA + acetyl-CoA = a 3-oxoacyl-CoA + CoA. It catalyses the reaction butanoyl-CoA + acetyl-CoA = 3-oxohexanoyl-CoA + CoA. The catalysed reaction is hexanoyl-CoA + acetyl-CoA = 3-oxooctanoyl-CoA + CoA. It carries out the reaction octanoyl-CoA + acetyl-CoA = 3-oxodecanoyl-CoA + CoA. The enzyme catalyses decanoyl-CoA + acetyl-CoA = 3-oxododecanoyl-CoA + CoA. It catalyses the reaction dodecanoyl-CoA + acetyl-CoA = 3-oxotetradecanoyl-CoA + CoA. The catalysed reaction is tetradecanoyl-CoA + acetyl-CoA = 3-oxohexadecanoyl-CoA + CoA. Its pathway is lipid metabolism; fatty acid beta-oxidation. Mitochondrial trifunctional enzyme catalyzes the last three of the four reactions of the mitochondrial beta-oxidation pathway. The mitochondrial beta-oxidation pathway is the major energy-producing process in tissues and is performed through four consecutive reactions breaking down fatty acids into acetyl-CoA. Among the enzymes involved in this pathway, the trifunctional enzyme exhibits specificity for long-chain fatty acids. Mitochondrial trifunctional enzyme is a heterotetrameric complex composed of two proteins, the trifunctional enzyme subunit alpha/HADHA carries the 2,3-enoyl-CoA hydratase and the 3-hydroxyacyl-CoA dehydrogenase activities, while the trifunctional enzyme subunit beta/HADHB described here bears the 3-ketoacyl-CoA thiolase activity. The polypeptide is Trifunctional enzyme subunit beta, mitochondrial (Hadhb) (Mus musculus (Mouse)).